Reading from the N-terminus, the 232-residue chain is 5'-methylthioadenosine/S-adenosylhomocysteine nucleosidase (232 aa).

E12 (proton acceptor) is an active-site residue. Substrate is bound by residues G78, I152, and 173–174 (ME). The active-site Proton donor is D197.

This sequence belongs to the PNP/UDP phosphorylase family. MtnN subfamily. In terms of assembly, homodimer.

The enzyme catalyses S-adenosyl-L-homocysteine + H2O = S-(5-deoxy-D-ribos-5-yl)-L-homocysteine + adenine. It catalyses the reaction S-methyl-5'-thioadenosine + H2O = 5-(methylsulfanyl)-D-ribose + adenine. It carries out the reaction 5'-deoxyadenosine + H2O = 5-deoxy-D-ribose + adenine. It functions in the pathway amino-acid biosynthesis; L-methionine biosynthesis via salvage pathway; S-methyl-5-thio-alpha-D-ribose 1-phosphate from S-methyl-5'-thioadenosine (hydrolase route): step 1/2. Its function is as follows. Catalyzes the irreversible cleavage of the glycosidic bond in both 5'-methylthioadenosine (MTA) and S-adenosylhomocysteine (SAH/AdoHcy) to adenine and the corresponding thioribose, 5'-methylthioribose and S-ribosylhomocysteine, respectively. Also cleaves 5'-deoxyadenosine, a toxic by-product of radical S-adenosylmethionine (SAM) enzymes, into 5-deoxyribose and adenine. Thus, is required for in vivo function of the radical SAM enzymes biotin synthase and lipoic acid synthase, that are inhibited by 5'-deoxyadenosine accumulation. The chain is 5'-methylthioadenosine/S-adenosylhomocysteine nucleosidase from Erwinia tasmaniensis (strain DSM 17950 / CFBP 7177 / CIP 109463 / NCPPB 4357 / Et1/99).